We begin with the raw amino-acid sequence, 216 residues long: Thymidylate kinase (216 aa).

10 to 17 (GIDGCGKT) lines the ATP pocket.

The protein belongs to the thymidylate kinase family.

The enzyme catalyses dTMP + ATP = dTDP + ADP. Phosphorylation of dTMP to form dTDP in both de novo and salvage pathways of dTTP synthesis. In Prochlorococcus marinus (strain MIT 9313), this protein is Thymidylate kinase.